Consider the following 346-residue polypeptide: Tryptophan--tRNA ligase (346 aa).

Residues Q10–S12 and G18–N19 contribute to the ATP site. The short motif at A11 to N19 is the 'HIGH' region element. D140 serves as a coordination point for L-tryptophan. ATP-binding positions include G152–D154, I191, and K200–S204. Positions K200–S204 match the 'KMSKS' region motif.

Belongs to the class-I aminoacyl-tRNA synthetase family. In terms of assembly, homodimer.

Its subcellular location is the cytoplasm. It catalyses the reaction tRNA(Trp) + L-tryptophan + ATP = L-tryptophyl-tRNA(Trp) + AMP + diphosphate + H(+). In terms of biological role, catalyzes the attachment of tryptophan to tRNA(Trp). The sequence is that of Tryptophan--tRNA ligase from Mycoplasma pneumoniae (strain ATCC 29342 / M129 / Subtype 1) (Mycoplasmoides pneumoniae).